The following is a 251-amino-acid chain: Eukaryotic translation initiation factor 4E-3 (251 aa).

The interval Asp200–Pro251 is disordered. The span at Ala230–Pro251 shows a compositional bias: polar residues.

This sequence belongs to the eukaryotic initiation factor 4E family. As to quaternary structure, eIF4F is a multi-subunit complex, the composition of which varies with external and internal environmental conditions. It is composed of at least eIF4A, eIF4E and eIF4G. eIF4E is also known to interact with other partners. Interacts with mxt. Component of the pid-1 variant of the PETISCO complex (also called the pid-3, erh-2, tofu-6, and ife-3 small RNA complex) containing at least pid-1, tofu-6, ife-3, pid-3, and erh-2, which is required for the biogenesis of a class of 21 nucleotide PIWI-interacting RNAs (piRNAs) that possess a uracil residue at the 5'-end (also called 21U-RNAs). Component of the tost-1 variant of the PETISCO complex (also called the pid-3, erh-2, tofu-6, and ife-3 small RNA complex) containing at least tost-1, tofu-6, ife-3, pid-3, and erh-2, which plays an essential role in embryogenesis. Within the pid-1 and tost-1 variants of the PETISCO complexes interacts with tofu-6 (via C-terminus). In contrast to the pid-1 variant of the PETISCO complex, the tost-1 variant of the PETISCO complex plays a minor role in the biogenesis of 21U-RNAs. In terms of tissue distribution, highly expressed in the germline (at protein level).

It localises to the cytoplasmic granule. The protein resides in the cytoplasm. It is found in the perinuclear region. Recognizes and binds the 7-methylguanosine-containing mRNA cap during an early step in the initiation of protein synthesis and facilitates ribosome binding by inducing the unwinding of the mRNAs secondary structures. All 5 eIF4E proteins bind monomethyl cap structures. Only ife-1, ife-2 and ife-5 bind trimethyl cap structures which result from trans-splicing. Translation of trimethyl cap structure mRNAs may be regulated by intracellular redox state; disulfide bonds change the width and depth of the cap-binding cavity determining selectivity to mRNA caps. Ife-3 is essential for viability. Component of the pid-1 and tost-1 variants of the PETISCO complexes, which have roles in the biogenesis of a class of 21 nucleotide PIWI-interacting RNAs (piRNAs) that possess a uracil residue at the 5'-end (also called 21U-RNAs) and embryogenesis, respectively. Within the pid-1 variant of the PETISCO complex binds to capped 21U-RNA precursor molecules, possibly playing a role in the processing of the 5' end of the molecules to promote binding of other complex components such as pid-3. However, it is not essential for the biogenesis of 21U-RNAs by itself. Within the tost-1 variant of the PETISCO complex binds to splice leader SL1 RNA fragments to possibly play a role in their processing. This chain is Eukaryotic translation initiation factor 4E-3, found in Caenorhabditis elegans.